The primary structure comprises 404 residues: Interferon-activable protein 205-A (404 aa).

Residues 1-88 (MENEYKRLVL…AEILKKERSE (88 aa)) form the Pyrin domain. A disordered region spans residues 85–198 (ERSEVTEETS…KSQPQNQNIP (114 aa)). Low complexity-rich tracts occupy residues 102-112 (ASPATPTSTTS) and 122-132 (TSTTQEETSTA). The span at 137–147 (GMSEEKTDVKK) shows a compositional bias: basic and acidic residues. Residues 168–185 (QSPISQVSSSASSNIPSA) show a composition bias toward low complexity. Residues 186–197 (KNQKSQPQNQNI) show a composition bias toward polar residues. Residues 192-392 (PQNQNIPRGA…CGDHSFVKVT (201 aa)) form the HIN-200 domain.

This sequence belongs to the HIN-200 family.

The protein localises to the nucleus. Its function is as follows. May act as a transcriptional regulator in the myeloid lineage. Inhibits cell growth via p53/TP53 and RB1-dependent and independent pathways. The polypeptide is Interferon-activable protein 205-A (Ifi205a) (Mus musculus (Mouse)).